Consider the following 209-residue polypeptide: Thymidine kinase (209 aa).

ATP-binding positions include 9 to 16 (AAMNAGKS) and 88 to 91 (DEAQ). E89 acts as the Proton acceptor in catalysis. Zn(2+)-binding residues include C146, C148, C183, and H186.

This sequence belongs to the thymidine kinase family. Homotetramer.

The protein resides in the cytoplasm. It carries out the reaction thymidine + ATP = dTMP + ADP + H(+). The polypeptide is Thymidine kinase (Legionella pneumophila (strain Lens)).